Here is a 207-residue protein sequence, read N- to C-terminus: MKLQVAIDLLSTEAALELAGKVAEYVDIIELGTPLIEAEGLSVITAVKKAHPDKIVFADMKTMDAGELEADIAFKAGADLVTVLGSADDSTIAGAVKAAQAHNKGVVVDLIGIEDKATRAQEVRALGAKFVEMHAGLDEQAKPGFDLNGLLAAGEKARVPFSVAGGVKVATIPAVQKAGAEVAVAGGAIYGAADPAAAAKELRAAIA.

It belongs to the HPS/KGPDC family. HPS subfamily.

It carries out the reaction D-ribulose 5-phosphate + formaldehyde = D-arabino-hex-3-ulose 6-phosphate. Its pathway is one-carbon metabolism; formaldehyde assimilation via RuMP pathway; D-fructose 6-phosphate from D-ribulose 5-phosphate and formaldehyde: step 1/2. Catalyzes the condensation of ribulose 5-phosphate with formaldehyde to form 3-hexulose 6-phosphate. The protein is 3-hexulose-6-phosphate synthase (rmpA) of Mycobacterium gastri.